Here is a 204-residue protein sequence, read N- to C-terminus: Peptidyl-tRNA hydrolase (204 aa).

A tRNA-binding site is contributed by Tyr14. The Proton acceptor role is filled by His19. 3 residues coordinate tRNA: Phe64, Asn66, and Asn112.

It belongs to the PTH family. As to quaternary structure, monomer.

The protein localises to the cytoplasm. It catalyses the reaction an N-acyl-L-alpha-aminoacyl-tRNA + H2O = an N-acyl-L-amino acid + a tRNA + H(+). In terms of biological role, hydrolyzes ribosome-free peptidyl-tRNAs (with 1 or more amino acids incorporated), which drop off the ribosome during protein synthesis, or as a result of ribosome stalling. Functionally, catalyzes the release of premature peptidyl moieties from peptidyl-tRNA molecules trapped in stalled 50S ribosomal subunits, and thus maintains levels of free tRNAs and 50S ribosomes. The protein is Peptidyl-tRNA hydrolase of Azorhizobium caulinodans (strain ATCC 43989 / DSM 5975 / JCM 20966 / LMG 6465 / NBRC 14845 / NCIMB 13405 / ORS 571).